The chain runs to 321 residues: Capsid protein (321 aa).

The tract at residues 1-43 (MSGEQTEQISKDKAVAAEQARKEQIAEGKKAAESPEVERRKKN) is disordered. Basic and acidic residues predominate over residues 9–39 (ISKDKAVAAEQARKEQIAEGKKAAESPEVER).

Belongs to the potexviruses coat protein family.

It localises to the virion. In terms of biological role, required for genome encapsidation. Forms ribonucleoprotein complexes along with TGB1 helicase and viral RNA. The protein is Capsid protein of Poplar mosaic virus (isolate ATCC Pv275) (PMV).